The sequence spans 119 residues: MSPRKTYILKLYVAGNTPNSMRALKTLRDILENEFRGVYALKVIDVLKNPQLAEADKILATPTLAKILPPPVRRIIGDLSDRERVLIGLDLLYDEISEEMLGSAELDTLADDDIASPDS.

It belongs to the KaiB family. May undergo a major conformational rearrangment; in the free state forms homooligomers. When bound to KaiC switches to a monomeric thioredoxin-fold (KaiB(fs)). The active oscillator complex is probably KaiC(6):KaiB(6).

Its function is as follows. Component of the KaiBC clock protein complex, which constitutes the main circadian regulator in cyanobacteria; it may modify the ATPase activity of KaiC. May be a metamorphic protein which reversibly switches between an inactive tetrameric fold and a rare, thioredoxin-like monomeric fold (KaiB(fs)). KaiB(fs) binds phospho-KaiC, and perhaps clock output effectors. This chain is Circadian clock oscillator protein KaiB, found in Prochlorococcus marinus (strain MIT 9313).